The sequence spans 363 residues: Phospho-N-acetylmuramoyl-pentapeptide-transferase (363 aa).

The next 10 helical transmembrane spans lie at 3-23 (TVLI…PLYI), 55-75 (VVII…TGAL), 76-96 (PTVS…VGFL), 116-136 (LAGQ…FPAA), 158-178 (LAVF…LIIT), 190-210 (GLDG…VLIC), 237-257 (LAVV…WNAS), 261-281 (IFMG…LAIL), 286-306 (ILLV…ILQV), and 340-360 (FWII…AEWV).

The protein belongs to the glycosyltransferase 4 family. MraY subfamily. The cofactor is Mg(2+).

Its subcellular location is the cell membrane. It carries out the reaction UDP-N-acetyl-alpha-D-muramoyl-L-alanyl-gamma-D-glutamyl-meso-2,6-diaminopimeloyl-D-alanyl-D-alanine + di-trans,octa-cis-undecaprenyl phosphate = di-trans,octa-cis-undecaprenyl diphospho-N-acetyl-alpha-D-muramoyl-L-alanyl-D-glutamyl-meso-2,6-diaminopimeloyl-D-alanyl-D-alanine + UMP. It participates in cell wall biogenesis; peptidoglycan biosynthesis. Catalyzes the initial step of the lipid cycle reactions in the biosynthesis of the cell wall peptidoglycan: transfers peptidoglycan precursor phospho-MurNAc-pentapeptide from UDP-MurNAc-pentapeptide onto the lipid carrier undecaprenyl phosphate, yielding undecaprenyl-pyrophosphoryl-MurNAc-pentapeptide, known as lipid I. In Kineococcus radiotolerans (strain ATCC BAA-149 / DSM 14245 / SRS30216), this protein is Phospho-N-acetylmuramoyl-pentapeptide-transferase.